Consider the following 243-residue polypeptide: 1-(5-phosphoribosyl)-5-[(5-phosphoribosylamino)methylideneamino] imidazole-4-carboxamide isomerase (243 aa).

The Proton acceptor role is filled by Asp-10. Asp-131 functions as the Proton donor in the catalytic mechanism.

It belongs to the HisA/HisF family.

It is found in the cytoplasm. The enzyme catalyses 1-(5-phospho-beta-D-ribosyl)-5-[(5-phospho-beta-D-ribosylamino)methylideneamino]imidazole-4-carboxamide = 5-[(5-phospho-1-deoxy-D-ribulos-1-ylimino)methylamino]-1-(5-phospho-beta-D-ribosyl)imidazole-4-carboxamide. The protein operates within amino-acid biosynthesis; L-histidine biosynthesis; L-histidine from 5-phospho-alpha-D-ribose 1-diphosphate: step 4/9. The polypeptide is 1-(5-phosphoribosyl)-5-[(5-phosphoribosylamino)methylideneamino] imidazole-4-carboxamide isomerase (Rhizorhabdus wittichii (strain DSM 6014 / CCUG 31198 / JCM 15750 / NBRC 105917 / EY 4224 / RW1) (Sphingomonas wittichii)).